Reading from the N-terminus, the 1407-residue chain is Clustered mitochondria protein (1407 aa).

Residues 1–12 are compositionally biased toward basic residues; the sequence is MAGKSNKSKAKR. Disordered stretches follow at residues 1-36 and 83-103; these read MAGK…PVAA and IPKA…PKQG. The segment covering 14–24 has biased composition (polar residues); that stretch reads AQSTTTNSTTD. Positions 384–670 constitute a Clu domain; the sequence is PDHKRDAARA…RVTPRDANYT (287 aa). The disordered stretch occupies residues 724–760; the sequence is IDGEANGASNSDQKSISDKQNTTAEDYAAGSSESSKS. Residues 730–747 are compositionally biased toward polar residues; that stretch reads GASNSDQKSISDKQNTTA. TPR repeat units follow at residues 1025-1058, 1067-1100, 1109-1142, 1151-1184, and 1193-1226; these read AKDL…LQQV, ANCC…NERC, AHSY…LGLS, AATF…NERL, and AVCY…LVKQ. The interval 1358–1407 is disordered; that stretch reads VSSEKGGENGEAKVQEKKESSENGKTENLAPAGLGAGLTSLDKKKQKAKK. Positions 1362-1382 are enriched in basic and acidic residues; that stretch reads KGGENGEAKVQEKKESSENGK.

This sequence belongs to the CLU family.

Its subcellular location is the cytoplasm. MRNA-binding protein involved in proper cytoplasmic distribution of mitochondria. Together with REC2, REC3 and FMT/CLU, contributes to the establishment of the cellular volume devoted to the chloroplast compartment. The chain is Clustered mitochondria protein from Arabidopsis thaliana (Mouse-ear cress).